We begin with the raw amino-acid sequence, 151 residues long: RNA polymerase-binding transcription factor DksA (151 aa).

Zn(2+) contacts are provided by cysteine 114, cysteine 117, cysteine 135, and cysteine 138. The segment at 114 to 138 (CNSCSVEIGIRRLEARPTADLCIDC) adopts a dksA C4-type zinc-finger fold.

Belongs to the DksA family. In terms of assembly, interacts directly with the RNA polymerase.

It localises to the cytoplasm. In terms of biological role, transcription factor that acts by binding directly to the RNA polymerase (RNAP). Required for negative regulation of rRNA expression and positive regulation of several amino acid biosynthesis promoters. Also required for regulation of fis expression. The chain is RNA polymerase-binding transcription factor DksA from Buchnera aphidicola subsp. Acyrthosiphon pisum (strain APS) (Acyrthosiphon pisum symbiotic bacterium).